Here is a 38-residue protein sequence, read N- to C-terminus: Very early lactation protein (38 aa).

In terms of assembly, homodimer. Post-translationally, O-glycosylated. Contains sialic acid residues. As to expression, found in the whey fraction of milk (at protein level).

The protein localises to the secreted. This Trichosurus vulpecula (Brush-tailed possum) protein is Very early lactation protein.